We begin with the raw amino-acid sequence, 218 residues long: Tubulin polymerization-promoting protein (218 aa).

A disordered region spans residues 1–46 (MADSKAKPAKAANKTPPKSPGDPARAAKRLSLESEGANEGATAAPE). The segment at 1 to 115 (MADSKAKPAK…SCRTITFEQF (115 aa)) is mediates interaction with LIMK1. Threonine 15 carries the post-translational modification Phosphothreonine. Phosphoserine is present on residues serine 19, serine 31, and serine 34. A Phosphothreonine modification is found at threonine 42. Zn(2+) is bound by residues histidine 60, histidine 71, cysteine 79, and cysteine 82. Threonine 91 bears the Phosphothreonine mark. Serine 106 carries the phosphoserine modification. Residue serine 151 is glycosylated (O-linked (GlcNAc) serine). Serine 158 and serine 159 each carry phosphoserine. The interval 166–192 (TDTSKFTGSHKERFDQSGKGKGKAGRV) is disordered. Over residues 174–183 (SHKERFDQSG) the composition is skewed to basic and acidic residues.

This sequence belongs to the TPPP family. As to quaternary structure, homodimer. Binds tubulin; binding is inhibited by GTP. Interacts with MAPK1. Interacts with GAPDH; the interaction is direct. Interacts with LIMK1 (via the PDZ domain); the interaction is direct. Interacts with LIMK2. Interacts with HDAC6; thereby inhibiting the tubulin deacetylase activity of HDAC6. Interacts with aggregated SNCA; may have a pro-aggregatory role in synucleinopathies. Interacts with DYNLL1. Interacts (via C-terminus) with S100A2, S100A6 and S100B; these interactions inhibit TPPP dimerization. Mg(2+) is required as a cofactor. Post-translationally, phosphorylated by LIMK1 on serine residues; phosphorylation may alter the tubulin polymerization activity. Phosphorylation by LIMK2, but not LIMK1, regulates astral microtubule organization at early stage of mitosis. Phosphorylation by ROCK1 at Ser-31, Ser-106 and Ser-158 inhibits interaction with HDAC6, resulting in decreased acetylation of tubulin, increased cell motility and entry into S-phase. Phosphorylation by CDK1 inhibits the microtubule polymerizing activity. In terms of processing, degraded by the proteasome; zinc-binding inhibits degradation by the proteasome. In terms of tissue distribution, widely expressed with higher expression in brain (at protein level).

The protein resides in the golgi outpost. It localises to the cytoplasm. It is found in the cytoskeleton. The protein localises to the microtubule organizing center. Its subcellular location is the nucleus. The protein resides in the spindle. It catalyses the reaction GTP + H2O = GDP + phosphate + H(+). Functionally, regulator of microtubule dynamics that plays a key role in myelination by promoting elongation of the myelin sheath. Acts as a microtubule nucleation factor in oligodendrocytes: specifically localizes to the postsynaptic Golgi apparatus region, also named Golgi outpost, and promotes microtubule nucleation, an important step for elongation of the myelin sheath. Required for both uniform polarized growth of distal microtubules as well as directing the branching of proximal processes. Shows magnesium-dependent GTPase activity; the role of the GTPase activity is unclear. In addition to microtubule nucleation activity, also involved in microtubule bundling and stabilization of existing microtubules, thereby maintaining the integrity of the microtubule network. Regulates microtubule dynamics by promoting tubulin acetylation: acts by inhibiting the tubulin deacetylase activity of HDAC6. Also regulates cell migration: phosphorylation by ROCK1 inhibits interaction with HDAC6, resulting in decreased acetylation of tubulin and increased cell motility. Plays a role in cell proliferation by regulating the G1/S-phase transition. Involved in astral microtubule organization and mitotic spindle orientation during early stage of mitosis; this process is regulated by phosphorylation by LIMK2. The sequence is that of Tubulin polymerization-promoting protein from Mus musculus (Mouse).